The chain runs to 568 residues: Potassium-transporting ATPase potassium-binding subunit (568 aa).

A run of 10 helical transmembrane segments spans residues 3–23 (TEIL…YPLG), 64–84 (FLKA…VLLV), 133–153 (FVIM…MAGI), 179–199 (ILLP…TPMG), 255–275 (MVEC…LGFY), 281–301 (LAYS…CINV), 375–395 (FGGV…AVFI), 418–438 (IATI…AISS), 497–517 (IVLI…AGLL), and 536–556 (TFGI…FFPV).

The protein belongs to the KdpA family. In terms of assembly, the system is composed of three essential subunits: KdpA, KdpB and KdpC.

It is found in the cell inner membrane. Part of the high-affinity ATP-driven potassium transport (or Kdp) system, which catalyzes the hydrolysis of ATP coupled with the electrogenic transport of potassium into the cytoplasm. This subunit binds the periplasmic potassium ions and delivers the ions to the membrane domain of KdpB through an intramembrane tunnel. This Bacteroides thetaiotaomicron (strain ATCC 29148 / DSM 2079 / JCM 5827 / CCUG 10774 / NCTC 10582 / VPI-5482 / E50) protein is Potassium-transporting ATPase potassium-binding subunit.